Here is a 178-residue protein sequence, read N- to C-terminus: Ribosome maturation factor RimP (178 aa).

This sequence belongs to the RimP family.

It is found in the cytoplasm. Functionally, required for maturation of 30S ribosomal subunits. This Streptococcus pyogenes serotype M18 (strain MGAS8232) protein is Ribosome maturation factor RimP.